The sequence spans 424 residues: GDP-fucose protein O-fucosyltransferase 2 (424 aa).

The N-terminal stretch at 1 to 20 is a signal peptide; the sequence is MHFFPIQLLVLFFAEKIAFA. Residue 51 to 55 coordinates GDP-beta-L-fucose; sequence GEGFN. The active-site Proton acceptor is Glu-52. The cysteines at positions 154 and 187 are disulfide-linked. An N-linked (GlcNAc...) asparagine glycan is attached at Asn-205. Residues 288 to 290, Asp-366, and 383 to 384 each bind GDP-beta-L-fucose; these read HWR and TF. Cys-407 and Cys-414 are joined by a disulfide.

This sequence belongs to the glycosyltransferase 68 family. In terms of tissue distribution, expressed in the anterior part of embryos, in the hypodermal and neuronal cells of the head. Expressed at different levels in a variety of cell types after hatching, including neuronal, hypodermal, muscle, intestinal, and somatic gonadal cells. Expressed in the nerve ring around the pharynx, in dorsal and ventral nerve cords, intestine, and a variety of hypodermal cells of L1-L3 larvae. Expressed in gonadal sheath cells, spermatheca, and tissues surrounding the vulva of adult hermaphrodites, and in the body wall muscle and hypodermal cells of adults of both sexes.

It is found in the endoplasmic reticulum. It localises to the golgi apparatus. It carries out the reaction L-seryl-[protein] + GDP-beta-L-fucose = 3-O-(alpha-L-fucosyl)-L-seryl-[protein] + GDP + H(+). It catalyses the reaction L-threonyl-[protein] + GDP-beta-L-fucose = 3-O-(alpha-L-fucosyl)-L-threonyl-[protein] + GDP + H(+). It functions in the pathway protein modification; protein glycosylation. Catalyzes the reaction that attaches fucose through an O-glycosidic linkage to a conserved serine or threonine residue in the consensus sequence C1-X-X-S/T-C2 of thrombospondin type I repeats (TSRs) where C1 and C2 are the first and second cysteines of the repeat, respectively. O-fucosylates members of several protein families including the ADAMTS superfamily and the thrombospondin (TSP) and spondin families. The sequence is that of GDP-fucose protein O-fucosyltransferase 2 (pad-2) from Caenorhabditis elegans.